The sequence spans 262 residues: GDT1-like protein C186.05c (262 aa).

5 helical membrane passes run 31-51 (ISMI…ALLA), 57-77 (ASVF…AVLV), 83-103 (FLFP…IFGV), 208-228 (VLDV…VAVI), and 242-262 (VLFF…FQGF).

This sequence belongs to the GDT1 family.

Its subcellular location is the endoplasmic reticulum membrane. The sequence is that of GDT1-like protein C186.05c from Schizosaccharomyces pombe (strain 972 / ATCC 24843) (Fission yeast).